Consider the following 220-residue polypeptide: Miraculin (220 aa).

The first 29 residues, 1–29 (MKELTMLSLSFFFVSALLAAAANPLLSAA), serve as a signal peptide directing secretion. The N-linked (GlcNAc...) asparagine glycan is linked to asparagine 71. 3 disulfides stabilise this stretch: cysteine 76–cysteine 121, cysteine 177–cysteine 188, and cysteine 181–cysteine 184. Asparagine 215 carries N-linked (GlcNAc...) asparagine glycosylation.

The protein belongs to the protease inhibitor I3 (leguminous Kunitz-type inhibitor) family. In terms of assembly, homotetramer; dimer of homodimer. Glycosylated; contains as much as 13,9% of sugars (glucosamine, mannose, galactose, xylose, and fucose). Expressed in fruit pulp after pollination. Not expressed in seeds, stems or leaves.

In terms of biological role, miraculin has the property of modifying a sour taste into a sweet taste. This alteration of taste perception persists for many minutes. The protein is Miraculin of Synsepalum dulcificum (Miracle fruit).